Here is a 221-residue protein sequence, read N- to C-terminus: Placenta growth factor (221 aa).

The signal sequence occupies residues 1 to 18; it reads MPVMRLFPCFLQLLAGLA. The N-linked (GlcNAc...) asparagine glycan is linked to Asn-33. Intrachain disulfides connect Cys-52–Cys-94, Cys-83–Cys-128, and Cys-87–Cys-130. The N-linked (GlcNAc...) asparagine glycan is linked to Asn-101. Residues 175–221 are disordered; it reads QSAVWPSSPVPEEIPRMHPGRNGKKQQRKPLREKMKPERCGDAVPRR. Residues 192 to 203 are compositionally biased toward basic residues; sequence HPGRNGKKQQRK. Residues 193–213 form a heparin-binding region; the sequence is PGRNGKKQQRKPLREKMKPER. Positions 204–221 are enriched in basic and acidic residues; sequence PLREKMKPERCGDAVPRR.

This sequence belongs to the PDGF/VEGF growth factor family. As to quaternary structure, antiparallel homodimer; disulfide-linked. Also found as heterodimer with VEGFA/VEGF. Isoform PlGF-3 is found both as homodimer and as monomer. Post-translationally, N-glycosylated. In terms of tissue distribution, while the three isoforms are present in most placental tissues, PlGF-2 is specific to early (8 week) placenta and only PlGF-1 is found in the colon and mammary carcinomas.

Its subcellular location is the secreted. Growth factor active in angiogenesis and endothelial cell growth, stimulating their proliferation and migration. It binds to the receptor FLT1/VEGFR-1. Isoform PlGF-2 binds NRP1/neuropilin-1 and NRP2/neuropilin-2 in a heparin-dependent manner. Also promotes cell tumor growth. This Homo sapiens (Human) protein is Placenta growth factor (PGF).